The sequence spans 553 residues: Arginine--tRNA ligase (553 aa).

The 'HIGH' region signature appears at 130–140 (ANPTGPIHLGG).

The protein belongs to the class-I aminoacyl-tRNA synthetase family. Monomer.

It localises to the cytoplasm. The enzyme catalyses tRNA(Arg) + L-arginine + ATP = L-arginyl-tRNA(Arg) + AMP + diphosphate. The sequence is that of Arginine--tRNA ligase from Corynebacterium aurimucosum (strain ATCC 700975 / DSM 44827 / CIP 107346 / CN-1) (Corynebacterium nigricans).